Reading from the N-terminus, the 350-residue chain is Pleckstrin (350 aa).

Residues 4–101 (KRIREGYLVK…WVRDIKKAIK (98 aa)) enclose the PH 1 domain. Lys64 carries the post-translational modification N6-acetyllysine. Phosphoserine is present on residues Ser113 and Ser117. A DEP domain is found at 136-221 (PEKGIKELNL…NPDAFYYFPD (86 aa)). The PH 2 domain occupies 244-347 (IIIKQGCLLK…WIKAIQVASR (104 aa)).

Major protein kinase C substrate of platelets. In Rattus norvegicus (Rat), this protein is Pleckstrin (Plek).